The chain runs to 244 residues: tRNA (guanine-N(1)-)-methyltransferase (244 aa).

Residues G120 and 140 to 145 contribute to the S-adenosyl-L-methionine site; that span reads IGDYIL.

Belongs to the RNA methyltransferase TrmD family. As to quaternary structure, homodimer.

The protein resides in the cytoplasm. It carries out the reaction guanosine(37) in tRNA + S-adenosyl-L-methionine = N(1)-methylguanosine(37) in tRNA + S-adenosyl-L-homocysteine + H(+). Its function is as follows. Specifically methylates guanosine-37 in various tRNAs. The sequence is that of tRNA (guanine-N(1)-)-methyltransferase from Brucella abortus (strain S19).